Consider the following 497-residue polypeptide: Probable malate:quinone oxidoreductase (497 aa).

Belongs to the MQO family. The cofactor is FAD.

The enzyme catalyses (S)-malate + a quinone = a quinol + oxaloacetate. Its pathway is carbohydrate metabolism; tricarboxylic acid cycle; oxaloacetate from (S)-malate (quinone route): step 1/1. The polypeptide is Probable malate:quinone oxidoreductase (Rhodopseudomonas palustris (strain ATCC BAA-98 / CGA009)).